The sequence spans 297 residues: Small ribosomal subunit protein uS2 (297 aa).

A disordered region spans residues 252-297 (GVPGTAFSAATAAPTSWEADGGDWAASSAAPAGESWAETQPAEAKW). Low complexity predominate over residues 256–289 (TAFSAATAAPTSWEADGGDWAASSAAPAGESWAE).

The protein belongs to the universal ribosomal protein uS2 family. Component of the small ribosomal subunit. Mature ribosomes consist of a small (40S) and a large (60S) subunit. The 40S subunit contains about 33 different proteins and 1 molecule of RNA (18S). The 60S subunit contains about 49 different proteins and 3 molecules of RNA (25S, 5.8S and 5S). Interacts with rps21.

The protein resides in the cytoplasm. Functionally, required for the assembly and/or stability of the 40S ribosomal subunit. Required for the processing of the 20S rRNA-precursor to mature 18S rRNA in a late step of the maturation of 40S ribosomal subunits. This chain is Small ribosomal subunit protein uS2 (rps0), found in Aspergillus fumigatus (strain CBS 144.89 / FGSC A1163 / CEA10) (Neosartorya fumigata).